A 388-amino-acid polypeptide reads, in one-letter code: Muscleblind-like protein 1 (388 aa).

A Phosphothreonine modification is found at Thr-6. 4 consecutive C3H1-type zinc fingers follow at residues 13-41 (WLTLEVCREFQRGTCSRPDTECKFAHPSK), 47-73 (NGRVIACFDSLKGRCSRENCKYLHPPP), 179-207 (TDRLEVCREYQRGNCNRGENDCRFAHPAD), and 215-241 (DNTVTVCMDYIKGRCSREKCKYFHPPA).

It belongs to the muscleblind family. Interacts with DDX1 and YBX1. Interacts with HNRNPH1; the interaction in RNA-independent. Interacts with RBPMS; the interaction allows cooperative assembly of RNA-bound stable cell-specific alternative splicing regulatory complexes. Highly expressed in cardiac, skeletal muscle and during myoblast differentiation. Weakly expressed in other tissues (at protein level). Expressed in heart, brain, placenta, lung, liver, skeletal muscle, kidney and pancreas.

It localises to the nucleus. Its subcellular location is the cytoplasm. The protein resides in the cytoplasmic granule. Its function is as follows. Mediates pre-mRNA alternative splicing regulation. Acts either as activator or repressor of splicing on specific pre-mRNA targets. Inhibits cardiac troponin-T (TNNT2) pre-mRNA exon inclusion but induces insulin receptor (IR) pre-mRNA exon inclusion in muscle. Antagonizes the alternative splicing activity pattern of CELF proteins. Regulates the TNNT2 exon 5 skipping through competition with U2AF2. Inhibits the formation of the spliceosome A complex on intron 4 of TNNT2 pre-mRNA. Binds to the stem-loop structure within the polypyrimidine tract of TNNT2 intron 4 during spliceosome assembly. Binds to the 5'-YGCU(U/G)Y-3'consensus sequence. Binds to the IR RNA. Binds to expanded CUG repeat RNA, which folds into a hairpin structure containing GC base pairs and bulged, unpaired U residues. Together with RNA binding proteins RBPMS and RBFOX2, activates vascular smooth muscle cells alternative splicing events. Regulates NCOR2 alternative splicing. The chain is Muscleblind-like protein 1 (MBNL1) from Homo sapiens (Human).